Here is a 663-residue protein sequence, read N- to C-terminus: DNA ligase (663 aa).

NAD(+) contacts are provided by residues 34-38, 83-84, and E114; these read DYEYD and SL. K116 acts as the N6-AMP-lysine intermediate in catalysis. Positions 137, 171, 286, and 310 each coordinate NAD(+). Zn(2+)-binding residues include C404, C407, C422, and C427. The region spanning 585–663 is the BRCT domain; sequence TVESPLTGKN…ADEFIKLANG (79 aa).

The protein belongs to the NAD-dependent DNA ligase family. LigA subfamily. Mg(2+) serves as cofactor. The cofactor is Mn(2+).

The enzyme catalyses NAD(+) + (deoxyribonucleotide)n-3'-hydroxyl + 5'-phospho-(deoxyribonucleotide)m = (deoxyribonucleotide)n+m + AMP + beta-nicotinamide D-nucleotide.. Its function is as follows. DNA ligase that catalyzes the formation of phosphodiester linkages between 5'-phosphoryl and 3'-hydroxyl groups in double-stranded DNA using NAD as a coenzyme and as the energy source for the reaction. It is essential for DNA replication and repair of damaged DNA. This chain is DNA ligase, found in Brachyspira hyodysenteriae (strain ATCC 49526 / WA1).